Here is a 217-residue protein sequence, read N- to C-terminus: MSNLKLDVHTADGKTNGTVELPASIFDAEASVALMHQVVTAQLAAKRQGTHATKTRGMVSGGGRKPFRQKGTGRARQGSIRAPHFTGGGTVHGPQPRDYSQRTPKKMKAAALRGALTDRVRHDRIHVVEELVPGQTPSTKAARAFIERLTDRKSVLVVLTREDVTAWKSVNNLPQVHTLVNDQLNTYDVLNADDVVFSVEALNAFINAADKTKEEAK.

The segment at 46–103 (KRQGTHATKTRGMVSGGGRKPFRQKGTGRARQGSIRAPHFTGGGTVHGPQPRDYSQRT) is disordered.

This sequence belongs to the universal ribosomal protein uL4 family. In terms of assembly, part of the 50S ribosomal subunit.

One of the primary rRNA binding proteins, this protein initially binds near the 5'-end of the 23S rRNA. It is important during the early stages of 50S assembly. It makes multiple contacts with different domains of the 23S rRNA in the assembled 50S subunit and ribosome. Its function is as follows. Forms part of the polypeptide exit tunnel. In Corynebacterium jeikeium (strain K411), this protein is Large ribosomal subunit protein uL4.